Consider the following 258-residue polypeptide: Transcription factor ORG3 (258 aa).

Residues 76–128 form the bHLH domain; that stretch reads VKKLNHNASERDRRRKINSLFSSLRSCLPASGQSKKLSIPATVSRSLKYIPEL.

In terms of assembly, homodimer. Expressed in vascular tissues. Detected in roots.

Its subcellular location is the nucleus. The polypeptide is Transcription factor ORG3 (ORG3) (Arabidopsis thaliana (Mouse-ear cress)).